Reading from the N-terminus, the 320-residue chain is 33 kDa chaperonin (320 aa).

The span at M1–S17 shows a compositional bias: basic and acidic residues. Residues M1–D27 form a disordered region. Disulfide bonds link C262-C264 and C295-C298.

Belongs to the HSP33 family. Post-translationally, under oxidizing conditions two disulfide bonds are formed involving the reactive cysteines. Under reducing conditions zinc is bound to the reactive cysteines and the protein is inactive.

Its subcellular location is the cytoplasm. Redox regulated molecular chaperone. Protects both thermally unfolding and oxidatively damaged proteins from irreversible aggregation. Plays an important role in the bacterial defense system toward oxidative stress. The protein is 33 kDa chaperonin of Synechococcus sp. (strain JA-3-3Ab) (Cyanobacteria bacterium Yellowstone A-Prime).